A 446-amino-acid chain; its full sequence is Probable polyamine aminopropyl transferase (446 aa).

A unknown region spans residues 1–117 (MVEPAIGRNH…KRIACVVSAV (117 aa)). The disordered stretch occupies residues 64–94 (GRGAERWHRSPRQANGRFSNQRYSSTSPNSS). Positions 75-94 (RQANGRFSNQRYSSTSPNSS) are enriched in polar residues. A PABS domain is found at 116–351 (AVIFVATSCV…ELFAKKPGSG (236 aa)). Positions 118–353 (IFVATSCVSP…FAKKPGSGSE (236 aa)) are spermidine synthase. Residues asparagine 147, glutamate 226, and 251-252 (DG) each bind S-methyl-5'-thioadenosine. Aspartate 269 serves as the catalytic Proton acceptor.

This sequence belongs to the spermidine/spermine synthase family. Homodimer or homotetramer.

The protein resides in the cytoplasm. It carries out the reaction S-adenosyl 3-(methylsulfanyl)propylamine + putrescine = S-methyl-5'-thioadenosine + spermidine + H(+). The protein operates within amine and polyamine biosynthesis; spermidine biosynthesis; spermidine from putrescine: step 1/1. Functionally, catalyzes the irreversible transfer of a propylamine group from the amino donor S-adenosylmethioninamine (decarboxy-AdoMet) to putrescine (1,4-diaminobutane) to yield spermidine. The protein is Probable polyamine aminopropyl transferase (speE) of Bifidobacterium longum (strain NCC 2705).